Here is a 172-residue protein sequence, read N- to C-terminus: Lipoprotein signal peptidase (172 aa).

Transmembrane regions (helical) follow at residues 4–24 (LSSS…LDQV), 39–59 (VAIL…AFSF), 69–89 (WFFT…LAKL), and 93–113 (WTLE…NVID). Catalysis depends on residues D122 and D140. The chain crosses the membrane as a helical span at residues 136 to 156 (FNVADMGISIGAVLLIISEFW).

This sequence belongs to the peptidase A8 family.

It localises to the cell inner membrane. It carries out the reaction Release of signal peptides from bacterial membrane prolipoproteins. Hydrolyzes -Xaa-Yaa-Zaa-|-(S,diacylglyceryl)Cys-, in which Xaa is hydrophobic (preferably Leu), and Yaa (Ala or Ser) and Zaa (Gly or Ala) have small, neutral side chains.. The protein operates within protein modification; lipoprotein biosynthesis (signal peptide cleavage). In terms of biological role, this protein specifically catalyzes the removal of signal peptides from prolipoproteins. This chain is Lipoprotein signal peptidase, found in Hydrogenovibrio crunogenus (strain DSM 25203 / XCL-2) (Thiomicrospira crunogena).